The following is a 290-amino-acid chain: AA9 family lytic polysaccharide monooxygenase A (290 aa).

The first 17 residues, 1–17, serve as a signal peptide directing secretion; it reads MKLSLLASVALVPFVSA. H18 and H101 together coordinate Cu(2+). A disulfide bridge links C67 with C189. H176 provides a ligand contact to O2. Position 187 (Y187) interacts with Cu(2+). N-linked (GlcNAc...) asparagine glycans are attached at residues N220 and N254. The disordered stretch occupies residues 240–290; it reads GGSGSGSSSYSKVANVTSSDESSQSGASSSQGTVSTCPNKYNRRHARQFKP. Positions 245 to 275 are enriched in low complexity; it reads GSSSYSKVANVTSSDESSQSGASSSQGTVST. Over residues 280–290 the composition is skewed to basic residues; sequence YNRRHARQFKP.

Belongs to the polysaccharide monooxygenase AA9 family. It depends on Cu(2+) as a cofactor.

The protein localises to the secreted. The enzyme catalyses [(1-&gt;4)-beta-D-glucosyl]n+m + reduced acceptor + O2 = 4-dehydro-beta-D-glucosyl-[(1-&gt;4)-beta-D-glucosyl]n-1 + [(1-&gt;4)-beta-D-glucosyl]m + acceptor + H2O.. Lytic polysaccharide monooxygenase (LPMO) that depolymerizes crystalline and amorphous polysaccharides via the oxidation of scissile alpha- or beta-(1-4)-glycosidic bonds, yielding exclusively C1 oxidation products. Catalysis by LPMOs requires the reduction of the active-site copper from Cu(II) to Cu(I) by a reducing agent and H(2)O(2) or O(2) as a cosubstrate. This is AA9 family lytic polysaccharide monooxygenase A from Aspergillus fumigatus (strain ATCC MYA-4609 / CBS 101355 / FGSC A1100 / Af293) (Neosartorya fumigata).